Here is a 1166-residue protein sequence, read N- to C-terminus: ATP-dependent helicase/deoxyribonuclease subunit B (1166 aa).

Residues 1–390 (MGVEFLVGRS…HPLIEFIRSS (390 aa)) form the UvrD-like helicase ATP-binding domain. 8–15 (GRSGSGKT) is an ATP binding site. The UvrD-like helicase C-terminal domain maps to 281 to 586 (TKRHQHAPEL…HFSLIPPALD (306 aa)). Residues Cys-801, Cys-1121, Cys-1124, and Cys-1130 each contribute to the [4Fe-4S] cluster site.

This sequence belongs to the helicase family. AddB/RexB type 1 subfamily. Heterodimer of AddA and AddB. Mg(2+) serves as cofactor. It depends on [4Fe-4S] cluster as a cofactor.

In terms of biological role, the heterodimer acts as both an ATP-dependent DNA helicase and an ATP-dependent, dual-direction single-stranded exonuclease. Recognizes the chi site generating a DNA molecule suitable for the initiation of homologous recombination. The AddB subunit has 5' -&gt; 3' nuclease activity but not helicase activity. The sequence is that of ATP-dependent helicase/deoxyribonuclease subunit B from Bacillus velezensis (strain DSM 23117 / BGSC 10A6 / LMG 26770 / FZB42) (Bacillus amyloliquefaciens subsp. plantarum).